A 334-amino-acid polypeptide reads, in one-letter code: GTP 3',8-cyclase (334 aa).

One can recognise a Radical SAM core domain in the interval 13–239 (RFHRKFYYLR…KVKAANDGPA (227 aa)). R22 provides a ligand contact to GTP. Residues C29 and C33 each coordinate [4Fe-4S] cluster. Residue Y35 coordinates S-adenosyl-L-methionine. C36 is a [4Fe-4S] cluster binding site. Residue R73 coordinates GTP. G77 contributes to the S-adenosyl-L-methionine binding site. GTP is bound at residue T104. S128 is an S-adenosyl-L-methionine binding site. GTP is bound at residue K165. M199 contributes to the S-adenosyl-L-methionine binding site. [4Fe-4S] cluster contacts are provided by C262 and C265. Position 267–269 (267–269 (RLR)) interacts with GTP. A [4Fe-4S] cluster-binding site is contributed by C279.

It belongs to the radical SAM superfamily. MoaA family. As to quaternary structure, monomer and homodimer. Requires [4Fe-4S] cluster as cofactor.

The enzyme catalyses GTP + AH2 + S-adenosyl-L-methionine = (8S)-3',8-cyclo-7,8-dihydroguanosine 5'-triphosphate + 5'-deoxyadenosine + L-methionine + A + H(+). Its pathway is cofactor biosynthesis; molybdopterin biosynthesis. Functionally, catalyzes the cyclization of GTP to (8S)-3',8-cyclo-7,8-dihydroguanosine 5'-triphosphate. The sequence is that of GTP 3',8-cyclase from Vibrio vulnificus (strain YJ016).